The primary structure comprises 595 residues: Beta-(1--&gt;2)glucan export ATP-binding/permease protein NdvA (595 aa).

The next 5 membrane-spanning stretches (helical) occupy residues 21–41 (FLLI…EPIL), 56–76 (LVTL…YVLV), 129–149 (IWLE…VLVP), 158–178 (LSIV…LVMQ), and 252–272 (ISIV…QLSV). Positions 21-301 (FLLICTANIT…ISGFINLAVS (281 aa)) constitute an ABC transmembrane type-1 domain. An ABC transporter domain is found at 335-569 (IQFHHVTYEF…DGHFYKLLKR (235 aa)). Position 368–375 (368–375 (GPTGAGKT)) interacts with ATP.

It belongs to the ABC transporter superfamily. Beta-(1--&gt;2)glucan exporter (TC 3.A.1.108.1) family. Homodimer.

Its subcellular location is the cell inner membrane. It carries out the reaction [(1-&gt;2)-beta-D-glucosyl](n)(in) + ATP + H2O = [(1-&gt;2)-beta-D-glucosyl](n)(out) + ADP + phosphate + H(+). In terms of biological role, involved in beta-(1--&gt;2)glucan export. Transmembrane domains (TMD) form a pore in the inner membrane and the ATP-binding domain (NBD) is responsible for energy generation. This chain is Beta-(1--&gt;2)glucan export ATP-binding/permease protein NdvA, found in Bartonella bacilliformis.